Reading from the N-terminus, the 347-residue chain is Cyclic AMP-dependent transcription factor ATF-4 (347 aa).

The interval 202–296 (TPQCVKEEDT…AATRYRQKKR (95 aa)) is disordered. At Thr-211 the chain carries Phosphothreonine. Phosphoserine is present on residues Ser-213, Ser-217, Ser-222, Ser-229, and Ser-233. The short motif at 213–222 (SDSDSGICMS) is the BetaTrCP degron motif element. A compositionally biased stretch (polar residues) spans 228–238 (GSPQHSPSTSR). A 4-hydroxyproline modification is found at Pro-234. A phosphoserine mark is found at Ser-243 and Ser-246. Glycyl lysine isopeptide (Lys-Gly) (interchain with G-Cter in SUMO2) cross-links involve residues Lys-256 and Lys-268. Residues 269 to 283 (VKTEKLDKKLKKMEQ) show a composition bias toward basic and acidic residues. The bZIP domain occupies 274 to 337 (LDKKLKKMEQ…QYLKDLIEEV (64 aa)). The tract at residues 276–296 (KKLKKMEQNKTAATRYRQKKR) is basic motif. Residues 301–337 (ALTGECKELEKKNEALKEKADSLAKEIQYLKDLIEEV) form an interaction with GABBR1 region. The leucine-zipper stretch occupies residues 302–330 (LTGECKELEKKNEALKEKADSLAKEIQYL). At Lys-307 the chain carries N6-acetyllysine.

Belongs to the bZIP family. As to quaternary structure, binds DNA as a homodimer and as a heterodimer. Heterodimer; heterodimerizes with CEBPB. Heterodimer; heterodimerizes with DDIT3/CHOP. Interacts with CEP290 (via an N-terminal region). Interacts with NEK6, DAPK2 (isoform 2) and ZIPK/DAPK3. Interacts (via its leucine zipper domain) with GABBR1 and GABBR2 (via their C-termini). Forms a heterodimer with TXLNG in osteoblasts. Interacts (via its DNA binding domain) with FOXO1 (C-terminal half); the interaction occurs in osteoblasts and regulates glucose homeostasis through suppression of beta-cell proliferation and a decrease in insulin production. Interacts with SATB2; the interaction results in enhanced DNA binding and transactivation by these transcription factors. Interacts with ABRAXAS2. Interacts with TRIB3, inhibiting the transactivation activity of ATF4. Interacts with DISC1; which inhibits ATF4 transcription factor activity by disrupting ATF4 dimerization and DNA-binding. Interacts with EP300/p300; EP300/p300 stabilizes ATF4 and increases its transcriptional activity independently of its catalytic activity by preventing its ubiquitination. Ubiquitinated by SCF(BTRC) in response to mTORC1 signal, followed by proteasomal degradation and leading to down-regulate expression of SIRT4. Interaction with EP300/p300 inhibits ubiquitination by SCF(BTRC). Post-translationally, phosphorylation at Ser-243 by RPS6KA3/RSK2 in osteoblasts enhances transactivation activity and promotes osteoblast differentiation. Phosphorylated on the betaTrCP degron motif at Ser-217, followed by phosphorylation at Thr-211, Ser-222, Ser-229, Ser-233 and Ser-246, promoting interaction with BTRC and ubiquitination. Phosphorylation is promoted by mTORC1. Phosphorylation at Ser-213 by CK2 decreases its stability. Phosphorylated by NEK6. In terms of processing, hydroxylated by PHD3, leading to decreased protein stability. As to expression, expressed in brain, heart, liver, spleen, lung and muscle, but not testis.

The protein localises to the nucleus. The protein resides in the nucleus speckle. It localises to the cytoplasm. It is found in the cell membrane. Its subcellular location is the cytoskeleton. The protein localises to the microtubule organizing center. The protein resides in the centrosome. Transcription factor that binds the cAMP response element (CRE) (consensus: 5'-GTGACGT[AC][AG]-3') and displays two biological functions, as regulator of metabolic and redox processes under normal cellular conditions, and as master transcription factor during integrated stress response (ISR). Binds to asymmetric CRE's as a heterodimer and to palindromic CRE's as a homodimer. Core effector of the ISR, which is required for adaptation to various stress such as endoplasmic reticulum (ER) stress, amino acid starvation, mitochondrial stress or oxidative stress. During ISR, ATF4 translation is induced via an alternative ribosome translation re-initiation mechanism in response to EIF2S1/eIF-2-alpha phosphorylation, and stress-induced ATF4 acts as a master transcription factor of stress-responsive genes in order to promote cell recovery. Promotes the transcription of genes linked to amino acid sufficiency and resistance to oxidative stress to protect cells against metabolic consequences of ER oxidation. Activates the transcription of NLRP1, possibly in concert with other factors in response to ER stress. Activates the transcription of asparagine synthetase (ASNS) in response to amino acid deprivation or ER stress. However, when associated with DDIT3/CHOP, the transcriptional activation of the ASNS gene is inhibited in response to amino acid deprivation. Together with DDIT3/CHOP, mediates programmed cell death by promoting the expression of genes involved in cellular amino acid metabolic processes, mRNA translation and the terminal unfolded protein response (terminal UPR), a cellular response that elicits programmed cell death when ER stress is prolonged and unresolved. Activates the expression of COX7A2L/SCAF1 downstream of the EIF2AK3/PERK-mediated unfolded protein response, thereby promoting formation of respiratory chain supercomplexes and increasing mitochondrial oxidative phosphorylation. Together with DDIT3/CHOP, activates the transcription of the IRS-regulator TRIB3 and promotes ER stress-induced neuronal cell death by regulating the expression of BBC3/PUMA in response to ER stress. May cooperate with the UPR transcriptional regulator QRICH1 to regulate ER protein homeostasis which is critical for cell viability in response to ER stress. In the absence of stress, ATF4 translation is at low levels and it is required for normal metabolic processes such as embryonic lens formation, fetal liver hematopoiesis, bone development and synaptic plasticity. Acts as a regulator of osteoblast differentiation in response to phosphorylation by RPS6KA3/RSK2: phosphorylation in osteoblasts enhances transactivation activity and promotes expression of osteoblast-specific genes and post-transcriptionally regulates the synthesis of Type I collagen, the main constituent of the bone matrix. Cooperates with FOXO1 in osteoblasts to regulate glucose homeostasis through suppression of beta-cell production and decrease in insulin production. Activates transcription of SIRT4. Regulates the circadian expression of the core clock component PER2 and the serotonin transporter SLC6A4. Binds in a circadian time-dependent manner to the cAMP response elements (CRE) in the SLC6A4 and PER2 promoters and periodically activates the transcription of these genes. Mainly acts as a transcriptional activator in cellular stress adaptation, but it can also act as a transcriptional repressor: acts as a regulator of synaptic plasticity by repressing transcription, thereby inhibiting induction and maintenance of long-term memory. Regulates synaptic functions via interaction with DISC1 in neurons, which inhibits ATF4 transcription factor activity by disrupting ATF4 dimerization and DNA-binding. The protein is Cyclic AMP-dependent transcription factor ATF-4 of Rattus norvegicus (Rat).